A 373-amino-acid chain; its full sequence is Dual-specificity RNA methyltransferase RlmN (373 aa).

Residue E94 is the Proton acceptor of the active site. The Radical SAM core domain maps to 100 to 339; the sequence is EDDRATLCVS…VIVRKTRGDD (240 aa). A disulfide bond links C107 and C344. 3 residues coordinate [4Fe-4S] cluster: C114, C118, and C121. S-adenosyl-L-methionine is bound by residues 168–169, S200, 222–224, and N301; these read GE and SIH. The active-site S-methylcysteine intermediate is the C344.

It belongs to the radical SAM superfamily. RlmN family. [4Fe-4S] cluster is required as a cofactor.

It localises to the cytoplasm. The catalysed reaction is adenosine(2503) in 23S rRNA + 2 reduced [2Fe-2S]-[ferredoxin] + 2 S-adenosyl-L-methionine = 2-methyladenosine(2503) in 23S rRNA + 5'-deoxyadenosine + L-methionine + 2 oxidized [2Fe-2S]-[ferredoxin] + S-adenosyl-L-homocysteine. The enzyme catalyses adenosine(37) in tRNA + 2 reduced [2Fe-2S]-[ferredoxin] + 2 S-adenosyl-L-methionine = 2-methyladenosine(37) in tRNA + 5'-deoxyadenosine + L-methionine + 2 oxidized [2Fe-2S]-[ferredoxin] + S-adenosyl-L-homocysteine. Functionally, specifically methylates position 2 of adenine 2503 in 23S rRNA and position 2 of adenine 37 in tRNAs. m2A2503 modification seems to play a crucial role in the proofreading step occurring at the peptidyl transferase center and thus would serve to optimize ribosomal fidelity. In Shewanella woodyi (strain ATCC 51908 / MS32), this protein is Dual-specificity RNA methyltransferase RlmN.